Reading from the N-terminus, the 105-residue chain is Large ribosomal subunit protein uL24 (105 aa).

It belongs to the universal ribosomal protein uL24 family. In terms of assembly, part of the 50S ribosomal subunit.

In terms of biological role, one of two assembly initiator proteins, it binds directly to the 5'-end of the 23S rRNA, where it nucleates assembly of the 50S subunit. Its function is as follows. One of the proteins that surrounds the polypeptide exit tunnel on the outside of the subunit. The chain is Large ribosomal subunit protein uL24 from Tolumonas auensis (strain DSM 9187 / NBRC 110442 / TA 4).